The primary structure comprises 179 residues: Auxin-responsive protein IAA15 (179 aa).

Residues 21–25 (LTLAL) carry the EAR-like (transcriptional repression) motif. Residues 86 to 173 (RKYVKVALDG…SCKRMRLMKT (88 aa)) enclose the PB1 domain.

The protein belongs to the Aux/IAA family. In terms of assembly, homodimers and heterodimers.

It localises to the nucleus. Aux/IAA proteins are short-lived transcriptional factors that function as repressors of early auxin response genes at low auxin concentrations. Repression is thought to result from the interaction with auxin response factors (ARFs), proteins that bind to the auxin-responsive promoter element (AuxRE). Formation of heterodimers with ARF proteins may alter their ability to modulate early auxin response genes expression. The polypeptide is Auxin-responsive protein IAA15 (IAA15) (Arabidopsis thaliana (Mouse-ear cress)).